The primary structure comprises 459 residues: Ribulose bisphosphate carboxylase (459 aa).

Asn111 is a substrate binding site. Lys166 acts as the Proton acceptor in catalysis. A substrate-binding site is contributed by Lys168. Lys191, Asp193, and Glu194 together coordinate Mg(2+). N6-carboxylysine is present on Lys191. The Proton acceptor role is filled by His287. Substrate-binding residues include Arg288, His321, and Ser368.

Belongs to the RuBisCO large chain family. Type II subfamily. In terms of assembly, homodimer. The cofactor is Mg(2+).

It catalyses the reaction 2 (2R)-3-phosphoglycerate + 2 H(+) = D-ribulose 1,5-bisphosphate + CO2 + H2O. The enzyme catalyses D-ribulose 1,5-bisphosphate + O2 = 2-phosphoglycolate + (2R)-3-phosphoglycerate + 2 H(+). Its function is as follows. RuBisCO catalyzes two reactions: the carboxylation of D-ribulose 1,5-bisphosphate, the primary event in carbon dioxide fixation, as well as the oxidative fragmentation of the pentose substrate. Both reactions occur simultaneously and in competition at the same active site. This is Ribulose bisphosphate carboxylase from Cereibacter sphaeroides (strain ATCC 17029 / ATH 2.4.9) (Rhodobacter sphaeroides).